Reading from the N-terminus, the 136-residue chain is Holo-[acyl-carrier-protein] synthase (136 aa).

Mg(2+)-binding residues include D8 and E57.

The protein belongs to the P-Pant transferase superfamily. AcpS family. Requires Mg(2+) as cofactor.

The protein localises to the cytoplasm. It carries out the reaction apo-[ACP] + CoA = holo-[ACP] + adenosine 3',5'-bisphosphate + H(+). In terms of biological role, transfers the 4'-phosphopantetheine moiety from coenzyme A to a Ser of acyl-carrier-protein. This is Holo-[acyl-carrier-protein] synthase from Methylobacterium radiotolerans (strain ATCC 27329 / DSM 1819 / JCM 2831 / NBRC 15690 / NCIMB 10815 / 0-1).